A 145-amino-acid polypeptide reads, in one-letter code: ATP synthase epsilon chain (145 aa).

Residues 93–104 show a composition bias toward basic and acidic residues; it reads AEAEKARARAQE. Positions 93–113 are disordered; sequence AEAEKARARAQEALKNPDASK.

This sequence belongs to the ATPase epsilon chain family. F-type ATPases have 2 components, CF(1) - the catalytic core - and CF(0) - the membrane proton channel. CF(1) has five subunits: alpha(3), beta(3), gamma(1), delta(1), epsilon(1). CF(0) has three main subunits: a, b and c.

It is found in the cell inner membrane. Produces ATP from ADP in the presence of a proton gradient across the membrane. The chain is ATP synthase epsilon chain from Francisella philomiragia subsp. philomiragia (strain ATCC 25017 / CCUG 19701 / FSC 153 / O#319-036).